The primary structure comprises 149 residues: Arginine repressor (149 aa).

The protein belongs to the ArgR family.

It localises to the cytoplasm. The protein operates within amino-acid biosynthesis; L-arginine biosynthesis [regulation]. In terms of biological role, regulates arginine biosynthesis genes. This Geobacillus sp. (strain WCH70) protein is Arginine repressor.